Here is a 33-residue protein sequence, read N- to C-terminus: Photosystem II reaction center protein Psb30 (33 aa).

A helical transmembrane segment spans residues 5 to 25 (VIAQPIVLGLIVASGPLVIVS).

This sequence belongs to the Psb30/Ycf12 family. PSII is composed of 1 copy each of membrane proteins PsbA, PsbB, PsbC, PsbD, PsbE, PsbF, PsbH, PsbI, PsbJ, PsbK, PsbL, PsbM, PsbT, PsbX, PsbY, PsbZ, Psb30/Ycf12, peripheral proteins of the oxygen-evolving complex and a large number of cofactors. It forms dimeric complexes.

The protein resides in the plastid membrane. In terms of biological role, a core subunit of photosystem II (PSII), probably helps stabilize the reaction center. This Aneura mirabilis (Parasitic liverwort) protein is Photosystem II reaction center protein Psb30.